The sequence spans 260 residues: uncharacterized protein (260 aa).

The first 22 residues, 1-22 (MGNIKSFALYISILLLIVVVAG), serve as a signal peptide directing secretion. C23 carries N-palmitoyl cysteine lipidation. A lipid anchor (S-diacylglycerol cysteine) is attached at C23.

The protein belongs to the staphylococcal tandem lipoprotein family.

Its subcellular location is the cell membrane. This is an uncharacterized protein from Staphylococcus aureus (strain MRSA252).